A 274-amino-acid polypeptide reads, in one-letter code: ATP synthase subunit b 2 (274 aa).

A helical transmembrane segment spans residues 2–22 (HIDWFVLLAQLVNFLILIYLL).

It belongs to the ATPase B chain family. F-type ATPases have 2 components, F(1) - the catalytic core - and F(0) - the membrane proton channel. F(1) has five subunits: alpha(3), beta(3), gamma(1), delta(1), epsilon(1). F(0) has three main subunits: a(1), b(2) and c(10-14). The alpha and beta chains form an alternating ring which encloses part of the gamma chain. F(1) is attached to F(0) by a central stalk formed by the gamma and epsilon chains, while a peripheral stalk is formed by the delta and b chains.

The protein resides in the cell inner membrane. Its function is as follows. F(1)F(0) ATP synthase produces ATP from ADP in the presence of a proton or sodium gradient. F-type ATPases consist of two structural domains, F(1) containing the extramembraneous catalytic core and F(0) containing the membrane proton channel, linked together by a central stalk and a peripheral stalk. During catalysis, ATP synthesis in the catalytic domain of F(1) is coupled via a rotary mechanism of the central stalk subunits to proton translocation. In terms of biological role, component of the F(0) channel, it forms part of the peripheral stalk, linking F(1) to F(0). The chain is ATP synthase subunit b 2 from Syntrophus aciditrophicus (strain SB).